Consider the following 617-residue polypeptide: Vacuolar protein sorting-associated protein 33A (617 aa).

A disordered region spans residues Asn268–Glu287.

It belongs to the STXBP/unc-18/SEC1 family. In terms of assembly, component of the class C core vacuole/endosome tethering (CORVET) complex composed of at least Vps8, dor/Vps18, car/Vps33A and Vps16A; unlike in other species, Vps11 is not part of the Drosophila complex. Due to the reduced number of components the Drosophila CORVET complex is often referred to as the miniCORVET complex. Interacts with ema. Component of the homotypic fusion and vacuole protein sorting (HOPS) complex, composed of Vps16A, car/Vps33A, dor/Vps18, Vps39, Vps11 and lt/Vps41. The tethering complex core made up of Vps16A, car/Vps33A and dor/Vps18 and shared by both HOPS and CORVET, preferentially associates with CORVET specific Vps8 over HOPS specific lt/Vps41. Interacts with Syx17 (via SNARE domain); the interaction requires Vps16A, may involve additional components of the HOPS complex and may promote assembly of the Syx17-Snap29-Vamp7 trans-SNARE complex.

Its subcellular location is the early endosome. It localises to the late endosome membrane. It is found in the lysosome membrane. Functionally, core component of the class C core vacuole/endosome tethering (CORVET) and the homotypic fusion and vacuole protein sorting (HOPS) tethering complexes involved in endo-lysosomal vesicle trafficking and lysosome biogenesis. The CORVET complex facilitates docking and fusion of endosomal vesicles during endosome maturation, acts upstream of HOPS, but is not involved in autophagic flux. The CORVET complex may cooperate with the early endosomal tether Rbsn-5 to mediate endosomal fusion. The HOPS complex facilitates docking and fusion of lysosomes with late endosomes and several other types of vesicles. The HOPS complex is also involved in autophagy and crinophagy (the elimination of unused secretory granules through their fusion with lysosomes). The HOPS complex probably instigates autophagosome-lysosome fusion by binding autophagosome associated Syx17/syntaxin 17 and promoting assembly of the trans-SNARE complex. Independent of Syx17/syntaxin 17 HOPS is involved in biosynthetic transport to lysosomes and lysosome-related organelles such as eye-pigment granules. Required for endocytic degradation of boss/bride of sevenless and N/Notch in developing ommatidia. The polypeptide is Vacuolar protein sorting-associated protein 33A (Drosophila melanogaster (Fruit fly)).